Consider the following 192-residue polypeptide: MRIILLGPPGAGKGTQARMLMERYNISQLSTGDMLREAIEKETEIGKQAKIFIESGALVPDFVVNQIVSDRIGEGDCVSGFILDGYPRTVGQAEALQRILQSKNMQLNAVIELIVDEDALIERIKKRVEEVVAVGGKIRSDDNPDSFAKRLLEYREKTVPLSKFYSNIGLLKTVDGMADIADVSRAINAILE.

Residue 10–15 (GAGKGT) participates in ATP binding. An NMP region spans residues 30–59 (STGDMLREAIEKETEIGKQAKIFIESGALV). AMP is bound by residues Thr-31, Arg-36, 57–59 (ALV), 85–88 (GYPR), and Gln-92. Residues 126 to 142 (KRVEEVVAVGGKIRSDD) form an LID region. ATP is bound at residue Arg-127. 2 residues coordinate AMP: Arg-139 and Arg-150. Ala-178 contacts ATP.

This sequence belongs to the adenylate kinase family. Monomer.

The protein resides in the cytoplasm. It carries out the reaction AMP + ATP = 2 ADP. The protein operates within purine metabolism; AMP biosynthesis via salvage pathway; AMP from ADP: step 1/1. Catalyzes the reversible transfer of the terminal phosphate group between ATP and AMP. Plays an important role in cellular energy homeostasis and in adenine nucleotide metabolism. The chain is Adenylate kinase from Bartonella bacilliformis (strain ATCC 35685 / KC583 / Herrer 020/F12,63).